Consider the following 272-residue polypeptide: Zinc transporter ZupT (272 aa).

The next 8 membrane-spanning stretches (helical) occupy residues 12–32, 40–60, 76–96, 126–146, 158–178, 187–207, 211–231, and 247–267; these read ALAVTLAAGLATGLGSLMVVF, LLAFGLAFAGGAMVFVSLSEI, LGFTYGTLTFLGGMLLIMVID, LLTAVAITAHNFPEGLATFFA, AFAIAIHNIPEGIAIAVPVYF, FGASLLSGLAEPIGAGIGYLL, VLSEAVFGAVFGVIAGVMVFL, and HETVYGLVSGMGTLAISLVLF. Asn136 and Glu139 together coordinate Fe(2+). Zn(2+) is bound by residues Glu139 and His164. Fe(2+) contacts are provided by Asn165, Glu168, and Glu197. Glu168 contacts Zn(2+).

This sequence belongs to the ZIP transporter (TC 2.A.5) family. ZupT subfamily.

Its subcellular location is the cell inner membrane. The enzyme catalyses Zn(2+)(in) = Zn(2+)(out). Functionally, mediates zinc uptake. May also transport other divalent cations. The protein is Zinc transporter ZupT of Xanthomonas campestris pv. campestris (strain ATCC 33913 / DSM 3586 / NCPPB 528 / LMG 568 / P 25).